A 244-amino-acid polypeptide reads, in one-letter code: uncharacterized protein (244 aa).

Transmembrane regions (helical) follow at residues 21 to 41 (FPYSVPMIAGFLFLGIAYGIY), 44 to 64 (ALGFGFLYPTLMALLIYAGSV), 66 to 86 (FIAAGALIAPFSPISVLLITL), 139 to 159 (WYMFFVSLYLHIYWVLGAAMG), 165 to 185 (VLPFNLKGVEFSMTALFLVIF), and 199 to 219 (LLGLGIALVFLLIIGKEYFLI).

It belongs to the AzlC family.

It localises to the cell membrane. This is an uncharacterized protein from Haemophilus influenzae (strain ATCC 51907 / DSM 11121 / KW20 / Rd).